A 460-amino-acid chain; its full sequence is Glucan endo-1,3-beta-D-glucosidase (460 aa).

The N-terminal stretch at 1 to 26 (MAANVQTSSLLFLVFLLLQNFYSANS) is a signal peptide. The Proton donor role is filled by E123. Residue E268 is the Nucleophile of the active site. The tract at residues 352–371 (NTQNPTTPATPTPTPKAAGS) is disordered. N355 carries N-linked (GlcNAc...) asparagine glycosylation. C373 and C435 are disulfide-bonded. The N-linked (GlcNAc...) asparagine glycan is linked to N447.

This sequence belongs to the glycosyl hydrolase 17 family. In terms of assembly, homodimer. Glycosylated. Post-translationally, contains two additional disulfide bonds, but it is unclear if they are between the pairs Cys-392-Cys-398 and Cys-407-Cys-453 (PudMed:18096638) or between the pairs Cys-392-Cys-453 and Cys-398-Cys-407 (PudMed:12392450). Expressed only in pollen.

It localises to the secreted. It carries out the reaction Hydrolysis of (1-&gt;3)-beta-D-glucosidic linkages in (1-&gt;3)-beta-D-glucans.. The chain is Glucan endo-1,3-beta-D-glucosidase (OLE9) from Olea europaea (Common olive).